Here is a 467-residue protein sequence, read N- to C-terminus: Argininosuccinate lyase (467 aa).

Belongs to the lyase 1 family. Argininosuccinate lyase subfamily.

The protein resides in the cytoplasm. It carries out the reaction 2-(N(omega)-L-arginino)succinate = fumarate + L-arginine. Its pathway is amino-acid biosynthesis; L-arginine biosynthesis; L-arginine from L-ornithine and carbamoyl phosphate: step 3/3. The protein is Argininosuccinate lyase of Campylobacter curvus (strain 525.92).